The primary structure comprises 591 residues: V-type ATP synthase alpha chain (591 aa).

Residue 242–249 (GPFGAGKT) coordinates ATP.

Belongs to the ATPase alpha/beta chains family.

It catalyses the reaction ATP + H2O + 4 H(+)(in) = ADP + phosphate + 5 H(+)(out). Produces ATP from ADP in the presence of a proton gradient across the membrane. The V-type alpha chain is a catalytic subunit. The sequence is that of V-type ATP synthase alpha chain from Chlamydia caviae (strain ATCC VR-813 / DSM 19441 / 03DC25 / GPIC) (Chlamydophila caviae).